The primary structure comprises 463 residues: Endoglucanase EG-1 (463 aa).

The first 22 residues, Met1–Ala22, serve as a signal peptide directing secretion. Positions Gln23 to Gly397 are catalytic. Asn78, Asn164, Asn204, and Asn208 each carry an N-linked (GlcNAc...) asparagine glycan. Catalysis depends on Glu218, which acts as the Nucleophile. Glu223 serves as the catalytic Proton donor. A disordered region spans residues Gly390–Gln429. N-linked (GlcNAc...) asparagine glycosylation is present at Asn394. Residues Pro402 to Cys427 are linker. The span at Ser408–Gln429 shows a compositional bias: low complexity. A CBM1 domain is found at Cys427–Leu463. 2 cysteine pairs are disulfide-bonded: Cys435/Cys452 and Cys446/Cys462.

It belongs to the glycosyl hydrolase 7 (cellulase C) family.

It is found in the secreted. The catalysed reaction is Endohydrolysis of (1-&gt;4)-beta-D-glucosidic linkages in cellulose, lichenin and cereal beta-D-glucans.. Functionally, the biological conversion of cellulose to glucose generally requires three types of hydrolytic enzymes: (1) Endoglucanases which cut internal beta-1,4-glucosidic bonds; (2) Exocellobiohydrolases that cut the disaccharide cellobiose from the non-reducing end of the cellulose polymer chain; (3) Beta-1,4-glucosidases which hydrolyze the cellobiose and other short cello-oligosaccharides to glucose. This Trichoderma longibrachiatum protein is Endoglucanase EG-1 (egl1).